We begin with the raw amino-acid sequence, 271 residues long: Protein CDV3 homolog (271 aa).

A compositionally biased stretch (basic and acidic residues) spans 37–47; it reads KREVVKPKKPE. Disordered regions lie at residues 37 to 151 and 186 to 271; these read KREV…GHGP and SQQA…DEAS. A compositionally biased stretch (low complexity) spans 48 to 61; sequence VAAGGVAVVGENEN. A compositionally biased stretch (acidic residues) spans 73–82; that stretch reads VEEEWKEFEE. Residues 95 to 114 are compositionally biased toward polar residues; sequence QLSTISSARSRTAQESSESQ. Ser-134 carries the phosphoserine modification. Residues 224-242 show a composition bias toward basic and acidic residues; the sequence is RPEEQRKKKNEPAFEEVRH.

The protein belongs to the CDV3 family.

The protein is Protein CDV3 homolog of Drosophila melanogaster (Fruit fly).